The chain runs to 497 residues: Endoglucanase 17 (497 aa).

The first 21 residues, 1–21 (MAAAGGAVLLLVLATATSVTG), serve as a signal peptide directing secretion. The Nucleophile role is filled by D77. The active site involves H406. N451 carries N-linked (GlcNAc...) asparagine glycosylation. Catalysis depends on residues D458 and E467.

It belongs to the glycosyl hydrolase 9 (cellulase E) family.

It is found in the secreted. The enzyme catalyses Endohydrolysis of (1-&gt;4)-beta-D-glucosidic linkages in cellulose, lichenin and cereal beta-D-glucans.. This chain is Endoglucanase 17 (GLU13), found in Oryza sativa subsp. japonica (Rice).